A 435-amino-acid polypeptide reads, in one-letter code: Chaperone SurA (435 aa).

The first 29 residues, 1–29 (MINKTLHTKHTLLGLLAMAVLMIPVWSQA), serve as a signal peptide directing secretion. PpiC domains are found at residues 180–281 (QEDF…KMID) and 290–390 (VTQY…RVDD).

It localises to the periplasm. It carries out the reaction [protein]-peptidylproline (omega=180) = [protein]-peptidylproline (omega=0). In terms of biological role, chaperone involved in the correct folding and assembly of outer membrane proteins. Recognizes specific patterns of aromatic residues and the orientation of their side chains, which are found more frequently in integral outer membrane proteins. May act in both early periplasmic and late outer membrane-associated steps of protein maturation. This Alcanivorax borkumensis (strain ATCC 700651 / DSM 11573 / NCIMB 13689 / SK2) protein is Chaperone SurA.